Here is a 397-residue protein sequence, read N- to C-terminus: DNA-directed RNA polymerase subunit Rpo1C (397 aa).

The protein belongs to the RNA polymerase beta' chain family. In terms of assembly, part of the RNA polymerase complex.

The protein resides in the cytoplasm. The catalysed reaction is RNA(n) + a ribonucleoside 5'-triphosphate = RNA(n+1) + diphosphate. DNA-dependent RNA polymerase (RNAP) catalyzes the transcription of DNA into RNA using the four ribonucleoside triphosphates as substrates. Forms part of the jaw domain. This chain is DNA-directed RNA polymerase subunit Rpo1C, found in Methanosarcina acetivorans (strain ATCC 35395 / DSM 2834 / JCM 12185 / C2A).